The following is a 1523-amino-acid chain: MALGRTGAGAAVRARLALGLALASILSGPPAAACPTKCTCSAASVDCHGLGLRAVPRGIPRNAERLDLDRNNITRITKMDFAGLKNLRVLHLEDNQVSIIERGAFQDLKQLERLRLNKNKLQVLPELLFQSTPKLTRLDLSENQIQGIPRKAFRGVTGVKNLQLDNNHISCIEDGAFRALRDLEILTLNNNNISRILVTSFNHMPKIRTLRLHSNHLYCDCHLAWLSDWLRQRRTIGQFTLCMAPVHLRGFSVADVQKKEYVCPGPHSEAPACNANSLSCPSACSCSNNIVDCRGKGLTEIPANLPEGIVEIRLEQNSIKSIPAGAFTQYKKLKRIDISKNQISDIAPDAFQGLKSLTSLVLYGNKITEIPKGLFDGLVSLQLLLLNANKINCLRVNTFQDLQNLNLLSLYDNKLQTISKGLFVPLQSIQTLHLAQNPFVCDCHLKWLADYLQDNPIETSGARCSSPRRLANKRISQIKSKKFRCSGSEDYRNRFSSECFMDLVCPEKCRCEGTIVDCSNQKLARIPSHLPEYTTDLRLNDNDISVLEATGIFKKLPNLRKINLSNNRIKEVREGAFDGAAGVQELMLTGNQLETMHGRMFRGLSSLKTLMLRSNLISCVSNDTFAGLSSVRLLSLYDNRITTITPGAFTTLVSLSTINLLSNPFNCNCHMAWLGRWLRKRRIVSGNPRCQKPFFLKEIPIQDVAIQDFTCDGNEESSCQLSPRCPEQCTCVETVVRCSNRGLHALPKGMPKDVTELYLEGNHLTAVPKELSAFRQLTLIDLSNNSISMLTNHTFSNMSHLSTLILSYNRLRCIPVHAFNGLRSLRVLTLHGNDISSVPEGSFNDLTSLSHLALGTNPLHCDCSLRWLSEWVKAGYKEPGIARCSSPESMADRLLLTTPTHRFQCKGPVDINIVAKCNACLSSPCKNNGTCSQDPVEQYRCTCPYSYKGKDCTVPINTCVQNPCEHGGTCHLSENLRDGFSCSCPLGFEGQRCEINPDDCEDNDCENSATCVDGINNYACLCPPNYTGELCDEVIDYCVPEMNLCQHEAKCISLDKGFRCECVPGYSGKLCETNNDDCVAHKCRHGAQCVDEVNGYTCICPQGFSGLFCEHPPPMVLLQTSPCDQYECQNGAQCIVVQQEPTCRCPPGFAGPRCEKLITVNFVGKDSYVELASAKVRPQANISLQVATDKDNGILLYKGDNDPLALELYQGHVRLVYDSLSSPPTTVYSVETVNDGQFHSVELVMLNQTLNLVVDKGAPKSLGKLQKQPAVGSNSPLYLGGIPTSTGLSALRQGADRPLGGFHGCIHEVRINNELQDFKALPPQSLGVSPGCKSCTVCRHGLCRSVEKDSVVCECHPGWTGPLCDQEARDPCLGHSCRHGTCMATGDSYVCKCAEGYGGALCDQKNDSASACSAFKCHHGQCHISDRGEPYCLCQPGFSGHHCEQENPCMGEIVREAIRRQKDYASCATASKVPIMECRGGCGSQCCQPIRSKRRKYVFQCTDGSSFVEEVERHLECGCRACS.

An N-terminal signal peptide occupies residues 1 to 33 (MALGRTGAGAAVRARLALGLALASILSGPPAAA). Residues 34–61 (CPTKCTCSAASVDCHGLGLRAVPRGIPR) enclose the LRRNT domain. LRR repeat units lie at residues 62–83 (NAERLDLDRNNITRITKMDFAG), 86–107 (NLRVLHLEDNQVSIIERGAFQD), 110–131 (QLERLRLNKNKLQVLPELLFQS), 134–155 (KLTRLDLSENQIQGIPRKAFRG), 158–179 (GVKNLQLDNNHISCIEDGAFRA), and 182–203 (DLEILTLNNNNISRILVTSFNH). Residue Asn-72 is glycosylated (N-linked (GlcNAc...) asparagine). The N-linked (GlcNAc...) asparagine glycan is linked to Asn-192. The LRRCT 1 domain occupies 215–265 (NHLYCDCHLAWLSDWLRQRRTIGQFTLCMAPVHLRGFSVADVQKKEYVCPG). The 37-residue stretch at 271–307 (PACNANSLSCPSACSCSNNIVDCRGKGLTEIPANLPE) folds into the LRRNT 2 domain. Cys-284 and Cys-293 form a disulfide bridge. LRR repeat units lie at residues 308–329 (GIVEIRLEQNSIKSIPAGAFTQ), 332–353 (KLKRIDISKNQISDIAPDAFQG), 356–377 (SLTSLVLYGNKITEIPKGLFDG), 380–401 (SLQLLLLNANKINCLRVNTFQD), and 404–425 (NLNLLSLYDNKLQTISKGLFVP). The LRRCT 2 domain maps to 437–487 (NPFVCDCHLKWLADYLQDNPIETSGARCSSPRRLANKRISQIKSKKFRCSG). Disulfide bonds link Cys-441–Cys-464, Cys-443–Cys-485, Cys-505–Cys-511, and Cys-509–Cys-518. Residues 496 to 532 (SSECFMDLVCPEKCRCEGTIVDCSNQKLARIPSHLPE) enclose the LRRNT 3 domain. LRR repeat units lie at residues 533–554 (YTTDLRLNDNDISVLEATGIFK), 558–579 (NLRKINLSNNRIKEVREGAFDG), 582–603 (GVQELMLTGNQLETMHGRMFRG), 606–627 (SLKTLMLRSNLISCVSNDTFAG), and 630–651 (SVRLLSLYDNRITTITPGAFTT). The N-linked (GlcNAc...) asparagine glycan is linked to Asn-563. N-linked (GlcNAc...) asparagine glycosylation occurs at Asn-622. Residues 663–713 (NPFNCNCHMAWLGRWLRKRRIVSGNPRCQKPFFLKEIPIQDVAIQDFTCDG) form the LRRCT 3 domain. 2 cysteine pairs are disulfide-bonded: Cys-667–Cys-690 and Cys-669–Cys-711. In terms of domain architecture, LRRNT 4 spans 716 to 752 (ESSCQLSPRCPEQCTCVETVVRCSNRGLHALPKGMPK). LRR repeat units follow at residues 753 to 774 (DVTELYLEGNHLTAVPKELSAF), 776 to 797 (QLTLIDLSNNSISMLTNHTFSN), 800 to 821 (HLSTLILSYNRLRCIPVHAFNG), and 824 to 845 (SLRVLTLHGNDISSVPEGSFND). N-linked (GlcNAc...) asparagine glycosylation is found at Asn-784, Asn-792, and Asn-797. The LRRCT 4 domain occupies 857–907 (NPLHCDCSLRWLSEWVKAGYKEPGIARCSSPESMADRLLLTTPTHRFQCKG). EGF-like domains lie at 918-953 (NACLSSPCKNNGTCSQDPVEQYRCTCPYSYKGKDCT), 955-994 (PINTCVQNPCEHGGTCHLSENLRDGFSCSCPLGFEGQRCE), 996-1032 (NPDDCEDNDCENSATCVDGINNYACLCPPNYTGELCD), 1034-1072 (VIDYCVPEMNLCQHEAKCISLDKGFRCECVPGYSGKLCE), 1074-1110 (NNDDCVAHKCRHGAQCVDEVNGYTCICPQGFSGLFCE), and 1119-1155 (QTSPCDQYECQNGAQCIVVQQEPTCRCPPGFAGPRCE). 18 cysteine pairs are disulfide-bonded: Cys-920–Cys-931, Cys-925–Cys-941, Cys-943–Cys-952, Cys-959–Cys-970, Cys-964–Cys-982, Cys-984–Cys-993, Cys-1000–Cys-1011, Cys-1005–Cys-1020, Cys-1022–Cys-1031, Cys-1038–Cys-1051, Cys-1045–Cys-1060, Cys-1062–Cys-1071, Cys-1078–Cys-1089, Cys-1083–Cys-1098, Cys-1100–Cys-1109, Cys-1123–Cys-1134, Cys-1128–Cys-1143, and Cys-1145–Cys-1154. N-linked (GlcNAc...) asparagine glycosylation is present at Asn-928. Asn-1025 is a glycosylation site (N-linked (GlcNAc...) asparagine). Positions 1158–1332 (ITVNFVGKDS…PQSLGVSPGC (175 aa)) constitute a Laminin G-like domain. N-linked (GlcNAc...) asparagine glycans are attached at residues Asn-1181 and Asn-1247. 5 disulfide bridges follow: Cys-1305-Cys-1332, Cys-1355-Cys-1364, Cys-1372-Cys-1382, Cys-1377-Cys-1391, and Cys-1393-Cys-1402. EGF-like domains follow at residues 1340–1365 (HGLCRSVEKDSVVCECHPGWTGPLCD) and 1368–1403 (ARDPCLGHSCRHGTCMATGDSYVCKCAEGYGGALCD). Asn-1406 carries N-linked (GlcNAc...) asparagine glycosylation. The 37-residue stretch at 1408–1444 (SASACSAFKCHHGQCHISDRGEPYCLCQPGFSGHHCE) folds into the EGF-like 9 domain. Intrachain disulfides connect Cys-1412-Cys-1422, Cys-1417-Cys-1432, Cys-1434-Cys-1443, Cys-1449-Cys-1487, Cys-1467-Cys-1501, Cys-1478-Cys-1517, and Cys-1482-Cys-1519. In terms of domain architecture, CTCK spans 1449–1523 (CMGEIVREAI…HLECGCRACS (75 aa)).

Its subcellular location is the secreted. Its function is as follows. May act as molecular guidance cue in cellular migration, and function may be mediated by interaction with roundabout homolog receptors. This chain is Slit homolog 3 protein (Slit3), found in Mus musculus (Mouse).